The following is a 310-amino-acid chain: Elongation factor Ts, mitochondrial (310 aa).

The N-terminal 42 residues, 1–42, are a transit peptide targeting the mitochondrion; the sequence is MGFQVLRSVIQAPLAKRSFLCKSCPSGLRVLYNNILLSSRSY.

It belongs to the EF-Ts family.

It localises to the mitochondrion. Associates with the EF-Tu.GDP complex and induces the exchange of GDP to GTP. It remains bound to the aminoacyl-tRNA.EF-Tu.GTP complex up to the GTP hydrolysis stage on the ribosome. The sequence is that of Elongation factor Ts, mitochondrial (tsf1) from Schizosaccharomyces japonicus (strain yFS275 / FY16936) (Fission yeast).